Here is a 440-residue protein sequence, read N- to C-terminus: tRNA(Ile)-lysidine synthase (440 aa).

31-36 (SGGADS) contributes to the ATP binding site.

This sequence belongs to the tRNA(Ile)-lysidine synthase family.

It localises to the cytoplasm. The catalysed reaction is cytidine(34) in tRNA(Ile2) + L-lysine + ATP = lysidine(34) in tRNA(Ile2) + AMP + diphosphate + H(+). Ligates lysine onto the cytidine present at position 34 of the AUA codon-specific tRNA(Ile) that contains the anticodon CAU, in an ATP-dependent manner. Cytidine is converted to lysidine, thus changing the amino acid specificity of the tRNA from methionine to isoleucine. The protein is tRNA(Ile)-lysidine synthase of Borreliella afzelii (strain PKo) (Borrelia afzelii).